A 238-amino-acid chain; its full sequence is Uridylate kinase (238 aa).

12–15 contributes to the ATP binding site; the sequence is KLSG. The segment at 20–25 is involved in allosteric activation by GTP; the sequence is GDEGFG. Gly54 is a UMP binding site. Residues Gly55 and Arg59 each coordinate ATP. UMP contacts are provided by residues Asp74 and 135–142; that span reads TGSPFFTT. 3 residues coordinate ATP: Thr162, Tyr168, and Asp171.

The protein belongs to the UMP kinase family. In terms of assembly, homohexamer.

The protein resides in the cytoplasm. It catalyses the reaction UMP + ATP = UDP + ADP. The protein operates within pyrimidine metabolism; CTP biosynthesis via de novo pathway; UDP from UMP (UMPK route): step 1/1. With respect to regulation, allosterically activated by GTP. Inhibited by UTP. Its function is as follows. Catalyzes the reversible phosphorylation of UMP to UDP. This Histophilus somni (strain 129Pt) (Haemophilus somnus) protein is Uridylate kinase.